We begin with the raw amino-acid sequence, 151 residues long: Small ribosomal subunit protein uS15 (151 aa).

This sequence belongs to the universal ribosomal protein uS15 family. As to quaternary structure, component of the small ribosomal subunit.

The protein localises to the cytoplasm. Its function is as follows. Component of the small ribosomal subunit. The ribosome is a large ribonucleoprotein complex responsible for the synthesis of proteins in the cell. The polypeptide is Small ribosomal subunit protein uS15 (rps13) (Xenopus laevis (African clawed frog)).